We begin with the raw amino-acid sequence, 192 residues long: ATP synthase protein MI25 (192 aa).

The chain crosses the membrane as a helical span at residues 29–49; the sequence is ILIYNEEMIVALCFIGFIIFS.

Belongs to the ATPase protein MI25 family. F-type ATPases have 2 components, CF(1) - the catalytic core - and CF(0) - the membrane proton channel. CF(1) has five subunits: alpha(3), beta(3), gamma(1), delta(1), epsilon(1). CF(0) has three main subunits: a, b and c.

It localises to the mitochondrion membrane. Functionally, this is one of the chains of the nonenzymatic component (CF(0) subunit) of the mitochondrial ATPase complex. This chain is ATP synthase protein MI25 (ATP4), found in Arabidopsis thaliana (Mouse-ear cress).